The following is a 274-amino-acid chain: Large ribosomal subunit protein uL2 (274 aa).

Disordered stretches follow at residues 37–60 (QHQKSGRNNNGHITTRHKGGGHKH) and 224–252 (AMNPIDHPHGGGEGRTGEGRHAVDPWGNL). Basic residues predominate over residues 50-60 (TTRHKGGGHKH). Basic and acidic residues predominate over residues 229–246 (DHPHGGGEGRTGEGRHAV).

This sequence belongs to the universal ribosomal protein uL2 family. As to quaternary structure, part of the 50S ribosomal subunit. Forms a bridge to the 30S subunit in the 70S ribosome.

In terms of biological role, one of the primary rRNA binding proteins. Required for association of the 30S and 50S subunits to form the 70S ribosome, for tRNA binding and peptide bond formation. It has been suggested to have peptidyltransferase activity; this is somewhat controversial. Makes several contacts with the 16S rRNA in the 70S ribosome. In Paracidovorax citrulli (strain AAC00-1) (Acidovorax citrulli), this protein is Large ribosomal subunit protein uL2.